The sequence spans 452 residues: Sulfide:quinone oxidoreductase, mitochondrial (452 aa).

FAD-binding positions include 54–55 (AG), Glu-77, Gln-85, and Val-120. The active-site Cysteine persulfide intermediate is the Cys-204. Cys-204 and Cys-380 form a disulfide bridge. FAD contacts are provided by residues Asp-337 and 345–348 (KTAA). Residue Cys-380 is the Cysteine persulfide intermediate of the active site.

This sequence belongs to the SQRD family. It depends on FAD as a cofactor.

The protein resides in the mitochondrion. The enzyme catalyses ubiquinone-10 + hydrogen sulfide + sulfite + 2 H(+) = ubiquinol-10 + thiosulfate. It catalyses the reaction a quinone + hydrogen sulfide + glutathione + H(+) = S-sulfanylglutathione + a quinol. Functionally, catalyzes the oxidation of hydrogen sulfide, with the help of a quinone. This Dictyostelium discoideum (Social amoeba) protein is Sulfide:quinone oxidoreductase, mitochondrial.